Here is a 245-residue protein sequence, read N- to C-terminus: Carbohydrate deacetylase 1 (245 aa).

Mg(2+) is bound by residues H59 and H125.

The protein belongs to the YdjC deacetylase family. As to quaternary structure, homodimer. Mg(2+) serves as cofactor.

In terms of biological role, probably catalyzes the deacetylation of acetylated carbohydrates an important step in the degradation of oligosaccharides. This Listeria innocua serovar 6a (strain ATCC BAA-680 / CLIP 11262) protein is Carbohydrate deacetylase 1.